Consider the following 248-residue polypeptide: DNA repair protein RecO (248 aa).

It belongs to the RecO family.

Involved in DNA repair and RecF pathway recombination. This chain is DNA repair protein RecO, found in Bacillus cereus (strain 03BB102).